Reading from the N-terminus, the 318-residue chain is Acetyl-coenzyme A carboxylase carboxyl transferase subunit alpha (318 aa).

The CoA carboxyltransferase C-terminal domain occupies 38 to 292 (KLEKRLAKLE…NKTITKSLHA (255 aa)).

It belongs to the AccA family. Acetyl-CoA carboxylase is a heterohexamer composed of biotin carboxyl carrier protein (AccB), biotin carboxylase (AccC) and two subunits each of ACCase subunit alpha (AccA) and ACCase subunit beta (AccD).

The protein resides in the cytoplasm. The catalysed reaction is N(6)-carboxybiotinyl-L-lysyl-[protein] + acetyl-CoA = N(6)-biotinyl-L-lysyl-[protein] + malonyl-CoA. The protein operates within lipid metabolism; malonyl-CoA biosynthesis; malonyl-CoA from acetyl-CoA: step 1/1. In terms of biological role, component of the acetyl coenzyme A carboxylase (ACC) complex. First, biotin carboxylase catalyzes the carboxylation of biotin on its carrier protein (BCCP) and then the CO(2) group is transferred by the carboxyltransferase to acetyl-CoA to form malonyl-CoA. This is Acetyl-coenzyme A carboxylase carboxyl transferase subunit alpha from Listeria monocytogenes serovar 1/2a (strain ATCC BAA-679 / EGD-e).